Reading from the N-terminus, the 257-residue chain is General L-amino acid transport ATP-binding protein AapP (257 aa).

Residues 18–252 enclose the ABC transporter domain; that stretch reads VEIVNMNKWY…PQHERTKLFL (235 aa). ATP is bound at residue 50-57; sequence GPSGSGKS.

It belongs to the ABC transporter superfamily.

Part of a binding-protein-dependent transport system for L-amino acids, affects the uptake as well as the efflux of these amino acids. Probably responsible for energy coupling to the transport system. This is General L-amino acid transport ATP-binding protein AapP (aapP) from Rhizobium johnstonii (strain DSM 114642 / LMG 32736 / 3841) (Rhizobium leguminosarum bv. viciae).